The following is a 254-amino-acid chain: Insulin-like growth factor-binding protein 4 (254 aa).

The N-terminal stretch at M1–G21 is a signal peptide. The IGFBP N-terminal domain occupies E23 to L103. Intrachain disulfides connect C27–C53, C30–C55, C38–C56, C44–C59, C67–C80, and C74–C100. N125 carries N-linked (GlcNAc...) asparagine glycosylation. 4 cysteine pairs are disulfide-bonded: C131–C138, C170–C200, C211–C222, and C224–C245. Residues Q167–C245 enclose the Thyroglobulin type-1 domain. A Phosphoserine modification is found at S251.

As to quaternary structure, binds IGF2 more than IGF1.

Its subcellular location is the secreted. Functionally, IGF-binding proteins prolong the half-life of the IGFs and have been shown to either inhibit or stimulate the growth promoting effects of the IGFs on cell culture. They alter the interaction of IGFs with their cell surface receptors. The protein is Insulin-like growth factor-binding protein 4 (Igfbp4) of Mus musculus (Mouse).